Consider the following 423-residue polypeptide: Zinc finger and BTB domain-containing protein 6 (423 aa).

A BTB domain is found at C33 to R97. S201 carries the post-translational modification Phosphoserine. 4 C2H2-type zinc fingers span residues H300–H322, F325–H347, F353–H375, and Y381–H404.

The protein localises to the nucleus. Functionally, may be involved in transcriptional regulation. The protein is Zinc finger and BTB domain-containing protein 6 (Zbtb6) of Mus musculus (Mouse).